The sequence spans 197 residues: Xanthine phosphoribosyltransferase (197 aa).

Leu20 and Asn27 together coordinate xanthine. Residue Ala128 to Ala132 coordinates 5-phospho-alpha-D-ribose 1-diphosphate. Xanthine is bound at residue Lys156.

It belongs to the purine/pyrimidine phosphoribosyltransferase family. Xpt subfamily. In terms of assembly, homodimer.

It is found in the cytoplasm. The catalysed reaction is XMP + diphosphate = xanthine + 5-phospho-alpha-D-ribose 1-diphosphate. It participates in purine metabolism; XMP biosynthesis via salvage pathway; XMP from xanthine: step 1/1. Its function is as follows. Converts the preformed base xanthine, a product of nucleic acid breakdown, to xanthosine 5'-monophosphate (XMP), so it can be reused for RNA or DNA synthesis. The chain is Xanthine phosphoribosyltransferase from Bacillus cereus (strain B4264).